Here is a 92-residue protein sequence, read N- to C-terminus: Long neurotoxin 1 (92 aa).

Residues 1–21 form the signal peptide; that stretch reads MKTLLLTLVVVTIVCLDLGYT. Cystine bridges form between Cys-24-Cys-42, Cys-35-Cys-63, Cys-48-Cys-52, Cys-67-Cys-79, and Cys-80-Cys-85.

Belongs to the three-finger toxin family. Long-chain subfamily. Type II alpha-neurotoxin sub-subfamily. Expressed by the venom gland.

It localises to the secreted. In terms of biological role, binds with high affinity to muscular (alpha-1/CHRNA1) and neuronal (alpha-7/CHRNA7) nicotinic acetylcholine receptor (nAChR) and inhibits acetylcholine from binding to the receptor, thereby impairing neuromuscular and neuronal transmission. This is Long neurotoxin 1 from Oxyuranus microlepidotus (Inland taipan).